The chain runs to 43 residues: Cytochrome b559 subunit beta (43 aa).

The chain crosses the membrane as a helical span at residues 18-34 (WLAIHGLAIPTVFFLGG). Heme is bound at residue histidine 22.

Belongs to the PsbE/PsbF family. As to quaternary structure, heterodimer of an alpha subunit and a beta subunit. PSII is composed of 1 copy each of membrane proteins PsbA, PsbB, PsbC, PsbD, PsbE, PsbF, PsbH, PsbI, PsbJ, PsbK, PsbL, PsbM, PsbT, PsbX, PsbY, PsbZ, Psb30/Ycf12, at least 3 peripheral proteins of the oxygen-evolving complex and a large number of cofactors. It forms dimeric complexes. Heme b is required as a cofactor.

The protein resides in the plastid. Its subcellular location is the chloroplast thylakoid membrane. This b-type cytochrome is tightly associated with the reaction center of photosystem II (PSII). PSII is a light-driven water:plastoquinone oxidoreductase that uses light energy to abstract electrons from H(2)O, generating O(2) and a proton gradient subsequently used for ATP formation. It consists of a core antenna complex that captures photons, and an electron transfer chain that converts photonic excitation into a charge separation. The chain is Cytochrome b559 subunit beta from Trieres chinensis (Marine centric diatom).